We begin with the raw amino-acid sequence, 144 residues long: uncharacterized protein (144 aa).

The disordered stretch occupies residues 1 to 24; the sequence is MGKVIQFPFGEEPEKKEEKELKTE. Residues 12 to 24 show a composition bias toward basic and acidic residues; the sequence is EPEKKEEKELKTE.

This is an uncharacterized protein from Aquifex aeolicus (strain VF5).